The sequence spans 257 residues: 4-hydroxy-tetrahydrodipicolinate reductase (257 aa).

NAD(+) contacts are provided by residues 7–12 (GAAGRM), Asp32, 91–93 (GTT), and 115–118 (SPNF). His147 functions as the Proton donor/acceptor in the catalytic mechanism. A (S)-2,3,4,5-tetrahydrodipicolinate-binding site is contributed by His148. Catalysis depends on Lys151, which acts as the Proton donor. 157–158 (GT) contacts (S)-2,3,4,5-tetrahydrodipicolinate.

The protein belongs to the DapB family.

It localises to the cytoplasm. The enzyme catalyses (S)-2,3,4,5-tetrahydrodipicolinate + NAD(+) + H2O = (2S,4S)-4-hydroxy-2,3,4,5-tetrahydrodipicolinate + NADH + H(+). It carries out the reaction (S)-2,3,4,5-tetrahydrodipicolinate + NADP(+) + H2O = (2S,4S)-4-hydroxy-2,3,4,5-tetrahydrodipicolinate + NADPH + H(+). It functions in the pathway amino-acid biosynthesis; L-lysine biosynthesis via DAP pathway; (S)-tetrahydrodipicolinate from L-aspartate: step 4/4. Functionally, catalyzes the conversion of 4-hydroxy-tetrahydrodipicolinate (HTPA) to tetrahydrodipicolinate. In Archaeoglobus fulgidus (strain ATCC 49558 / DSM 4304 / JCM 9628 / NBRC 100126 / VC-16), this protein is 4-hydroxy-tetrahydrodipicolinate reductase.